The following is a 363-amino-acid chain: NAD(P)H-quinone oxidoreductase subunit 1, chloroplastic (363 aa).

Helical transmembrane passes span 30-50 (LVPILTLVLGITIGVLVIVWL), 98-118 (FSIGPAIAVISILLSFSVIPF), 129-149 (IGIFLWIAISSIAPVGLLMSG), 248-268 (YSGIKFGLFYVASYLNLLLSS), 300-320 (IIGTTIGIFITLAKTYLFLFI), and 343-363 (FLLPISLGNLLLTTSFQLLSL).

The protein belongs to the complex I subunit 1 family. In terms of assembly, NDH is composed of at least 16 different subunits, 5 of which are encoded in the nucleus.

Its subcellular location is the plastid. It localises to the chloroplast thylakoid membrane. The enzyme catalyses a plastoquinone + NADH + (n+1) H(+)(in) = a plastoquinol + NAD(+) + n H(+)(out). The catalysed reaction is a plastoquinone + NADPH + (n+1) H(+)(in) = a plastoquinol + NADP(+) + n H(+)(out). Its function is as follows. NDH shuttles electrons from NAD(P)H:plastoquinone, via FMN and iron-sulfur (Fe-S) centers, to quinones in the photosynthetic chain and possibly in a chloroplast respiratory chain. The immediate electron acceptor for the enzyme in this species is believed to be plastoquinone. Couples the redox reaction to proton translocation, and thus conserves the redox energy in a proton gradient. This Gossypium barbadense (Sea Island cotton) protein is NAD(P)H-quinone oxidoreductase subunit 1, chloroplastic.